Reading from the N-terminus, the 431-residue chain is MKQMIIHGGKPLQGDVWIGGAKNSTVALIPASILSRTPVVLEGVPRIADVINLMDLLDEMDVRCEFKETTLRIDPTDIKMSPLPAGKIKSLRASYYFMGALLGRFGKAVVGFPGGDDIGPRPIDQHIKGFEALGASVKNENDQIIITAPEDGLHGAKIHLKMPSVGATMNIIMASVTAQGQTIIENAAKEPEIIDLATFLNNMGAVIRGAGTDVIRIEGVEMLKAQIPHTIIPDRIEAGTYVSLAACIGNGIRIHNIIEEHLDSYLAKVEEMGVVIDADEDSLYVYPAGDLKMVQVKTDVYPGFATDLQQPITPLLLTAKSGEGVVIDNIYPQRIGHIAQLQKMGANIKVADNIILAHPTEQLHGAEVIAGEIRAGACLMIAGLMAHGTTVIDKAGNILRGYDRIQEKLRQLGADVTIKDNPDVPGILDNI.

Residue 22 to 23 participates in phosphoenolpyruvate binding; the sequence is KN. Arg92 is a binding site for UDP-N-acetyl-alpha-D-glucosamine. Catalysis depends on Asp116, which acts as the Proton donor. UDP-N-acetyl-alpha-D-glucosamine contacts are provided by residues 121–125, Asp307, and Ile330; that span reads RPIDQ.

Belongs to the EPSP synthase family. MurA subfamily.

The protein localises to the cytoplasm. It catalyses the reaction phosphoenolpyruvate + UDP-N-acetyl-alpha-D-glucosamine = UDP-N-acetyl-3-O-(1-carboxyvinyl)-alpha-D-glucosamine + phosphate. Its pathway is cell wall biogenesis; peptidoglycan biosynthesis. Cell wall formation. Adds enolpyruvyl to UDP-N-acetylglucosamine. The sequence is that of UDP-N-acetylglucosamine 1-carboxyvinyltransferase from Lactobacillus acidophilus (strain ATCC 700396 / NCK56 / N2 / NCFM).